The following is a 489-amino-acid chain: Cytochrome P450 2C41 (489 aa).

Heme is bound at residue cysteine 434.

This sequence belongs to the cytochrome P450 family. The cofactor is heme.

The protein resides in the endoplasmic reticulum membrane. It is found in the microsome membrane. The catalysed reaction is an organic molecule + reduced [NADPH--hemoprotein reductase] + O2 = an alcohol + oxidized [NADPH--hemoprotein reductase] + H2O + H(+). Its function is as follows. Cytochromes P450 are a group of heme-thiolate monooxygenases. In liver microsomes, this enzyme is involved in an NADPH-dependent electron transport pathway. It oxidizes a variety of structurally unrelated compounds, including steroids, fatty acids, and xenobiotics. The protein is Cytochrome P450 2C41 (CYP2C41) of Canis lupus familiaris (Dog).